The sequence spans 115 residues: Nitrogenase-stabilizing/protective protein NifW (115 aa).

This sequence belongs to the NifW family. In terms of assembly, homotrimer; associates with NifD.

Its function is as follows. May protect the nitrogenase Fe-Mo protein from oxidative damage. The protein is Nitrogenase-stabilizing/protective protein NifW of Stutzerimonas stutzeri (strain A1501) (Pseudomonas stutzeri).